We begin with the raw amino-acid sequence, 337 residues long: Glyceraldehyde-3-phosphate dehydrogenase 1 (337 aa).

Residues 11 to 12 (RI), Asp33, and Arg78 contribute to the NAD(+) site. D-glyceraldehyde 3-phosphate is bound by residues 149 to 151 (SCT), Thr180, 209 to 210 (TG), and Arg232. The Nucleophile role is filled by Cys150. Residue Asn318 participates in NAD(+) binding.

Belongs to the glyceraldehyde-3-phosphate dehydrogenase family. As to quaternary structure, homotetramer.

The protein resides in the cytoplasm. The enzyme catalyses D-glyceraldehyde 3-phosphate + phosphate + NAD(+) = (2R)-3-phospho-glyceroyl phosphate + NADH + H(+). It participates in carbohydrate degradation; glycolysis; pyruvate from D-glyceraldehyde 3-phosphate: step 1/5. This is Glyceraldehyde-3-phosphate dehydrogenase 1 (gpd1) from Agaricus bisporus (White button mushroom).